We begin with the raw amino-acid sequence, 601 residues long: DNA ligase (601 aa).

Asp-258 provides a ligand contact to ATP. Lys-260 serves as the catalytic N6-AMP-lysine intermediate. Residues Arg-265, Arg-280, Glu-310, Phe-350, Arg-427, and Lys-433 each coordinate ATP. The disordered stretch occupies residues 568–601; it reads DKSPEDATTTDEILEMYNKQPKKKIESPPIDESV.

It belongs to the ATP-dependent DNA ligase family. The cofactor is Mg(2+).

It catalyses the reaction ATP + (deoxyribonucleotide)n-3'-hydroxyl + 5'-phospho-(deoxyribonucleotide)m = (deoxyribonucleotide)n+m + AMP + diphosphate.. Its function is as follows. DNA ligase that seals nicks in double-stranded DNA during DNA replication, DNA recombination and DNA repair. The chain is DNA ligase from Saccharolobus islandicus (strain Y.G.57.14 / Yellowstone #1) (Sulfolobus islandicus).